The following is a 426-amino-acid chain: Enolase (426 aa).

A (2R)-2-phosphoglycerate-binding site is contributed by Q163. E205 (proton donor) is an active-site residue. 3 residues coordinate Mg(2+): D242, E285, and D312. Positions 337, 366, 367, and 388 each coordinate (2R)-2-phosphoglycerate. K337 acts as the Proton acceptor in catalysis.

Belongs to the enolase family. Requires Mg(2+) as cofactor.

It is found in the cytoplasm. Its subcellular location is the secreted. The protein localises to the cell surface. It carries out the reaction (2R)-2-phosphoglycerate = phosphoenolpyruvate + H2O. It functions in the pathway carbohydrate degradation; glycolysis; pyruvate from D-glyceraldehyde 3-phosphate: step 4/5. Functionally, catalyzes the reversible conversion of 2-phosphoglycerate (2-PG) into phosphoenolpyruvate (PEP). It is essential for the degradation of carbohydrates via glycolysis. The sequence is that of Enolase from Caulobacter vibrioides (strain ATCC 19089 / CIP 103742 / CB 15) (Caulobacter crescentus).